Here is a 249-residue protein sequence, read N- to C-terminus: Ribonuclease PH (249 aa).

Phosphate is bound by residues Arg-86 and 124 to 126 (GTR).

The protein belongs to the RNase PH family. Homohexameric ring arranged as a trimer of dimers.

The catalysed reaction is tRNA(n+1) + phosphate = tRNA(n) + a ribonucleoside 5'-diphosphate. Its function is as follows. Phosphorolytic 3'-5' exoribonuclease that plays an important role in tRNA 3'-end maturation. Removes nucleotide residues following the 3'-CCA terminus of tRNAs; can also add nucleotides to the ends of RNA molecules by using nucleoside diphosphates as substrates, but this may not be physiologically important. Probably plays a role in initiation of 16S rRNA degradation (leading to ribosome degradation) during starvation. The sequence is that of Ribonuclease PH from Clostridium botulinum (strain Alaska E43 / Type E3).